The sequence spans 105 residues: Guanidinium exporter (105 aa).

A helical transmembrane segment spans residues Met1–Lys21. At Tyr22 to Arg28 the chain is on the cytoplasmic side. Residues Leu29–Ala49 traverse the membrane as a helical segment. Over Met50–Thr57 the chain is Periplasmic. A helical transmembrane segment spans residues Ala58–Leu78. The Cytoplasmic portion of the chain corresponds to Gly79–Ser81. The helical transmembrane segment at Ala82 to Leu102 threads the bilayer. At Ser103–His105 the chain is on the periplasmic side.

It belongs to the drug/metabolite transporter (DMT) superfamily. Small multidrug resistance (SMR) (TC 2.A.7.1) family. Gdx/SugE subfamily.

It is found in the cell inner membrane. In terms of biological role, guanidinium ion exporter. Couples guanidinium export to the proton motive force, exchanging one guanidinium ion for two protons. This Salmonella typhi protein is Guanidinium exporter.